The chain runs to 173 residues: Crossover junction endodeoxyribonuclease RuvC (173 aa).

Active-site residues include Asp8, Glu67, and Asp139. The Mg(2+) site is built by Asp8, Glu67, and Asp139.

This sequence belongs to the RuvC family. In terms of assembly, homodimer which binds Holliday junction (HJ) DNA. The HJ becomes 2-fold symmetrical on binding to RuvC with unstacked arms; it has a different conformation from HJ DNA in complex with RuvA. In the full resolvosome a probable DNA-RuvA(4)-RuvB(12)-RuvC(2) complex forms which resolves the HJ. Mg(2+) is required as a cofactor.

Its subcellular location is the cytoplasm. It catalyses the reaction Endonucleolytic cleavage at a junction such as a reciprocal single-stranded crossover between two homologous DNA duplexes (Holliday junction).. In terms of biological role, the RuvA-RuvB-RuvC complex processes Holliday junction (HJ) DNA during genetic recombination and DNA repair. Endonuclease that resolves HJ intermediates. Cleaves cruciform DNA by making single-stranded nicks across the HJ at symmetrical positions within the homologous arms, yielding a 5'-phosphate and a 3'-hydroxyl group; requires a central core of homology in the junction. The consensus cleavage sequence is 5'-(A/T)TT(C/G)-3'. Cleavage occurs on the 3'-side of the TT dinucleotide at the point of strand exchange. HJ branch migration catalyzed by RuvA-RuvB allows RuvC to scan DNA until it finds its consensus sequence, where it cleaves and resolves the cruciform DNA. In Yersinia pseudotuberculosis serotype O:1b (strain IP 31758), this protein is Crossover junction endodeoxyribonuclease RuvC.